A 120-amino-acid polypeptide reads, in one-letter code: Large ribosomal subunit protein uL18 (120 aa).

This sequence belongs to the universal ribosomal protein uL18 family. In terms of assembly, part of the 50S ribosomal subunit; part of the 5S rRNA/L5/L18/L25 subcomplex. Contacts the 5S and 23S rRNAs.

Functionally, this is one of the proteins that bind and probably mediate the attachment of the 5S RNA into the large ribosomal subunit, where it forms part of the central protuberance. The chain is Large ribosomal subunit protein uL18 from Bartonella tribocorum (strain CIP 105476 / IBS 506).